We begin with the raw amino-acid sequence, 393 residues long: Fructose-bisphosphate aldolase 4, cytosolic (393 aa).

A substrate-binding site is contributed by R73. Position 207 is an S-glutathionyl cysteine; transient; alternate (C207). Residue C207 is modified to S-nitrosocysteine; transient; alternate. Catalysis depends on E217, which acts as the Proton acceptor. The active-site Schiff-base intermediate with dihydroxyacetone-P is K259. Substrate-binding positions include 301–303 (SGG) and R333.

This sequence belongs to the class I fructose-bisphosphate aldolase family. Homotetramer. S-glutathionylated at Cys-207. In terms of processing, S-nitrosylated at Cys-207. As to expression, highly expressed in flowers.

Its subcellular location is the cytoplasm. The protein localises to the cytosol. It carries out the reaction beta-D-fructose 1,6-bisphosphate = D-glyceraldehyde 3-phosphate + dihydroxyacetone phosphate. It functions in the pathway carbohydrate degradation; glycolysis; D-glyceraldehyde 3-phosphate and glycerone phosphate from D-glucose: step 4/4. In terms of biological role, fructose-bisphosphate aldolase that plays a key role in glycolysis and gluconeogenesis. The polypeptide is Fructose-bisphosphate aldolase 4, cytosolic (Arabidopsis thaliana (Mouse-ear cress)).